The chain runs to 424 residues: Nuclear hormone receptor family member nhr-55 (424 aa).

Low complexity predominate over residues 1–19 (MNSPSSSSSFCSSSSSPSS). A disordered region spans residues 1–20 (MNSPSSSSSFCSSSSSPSSL). A DNA-binding region (nuclear receptor) is located at residues 25–100 (PDTCQVCGQK…VGMTIENFQF (76 aa)). 2 NR C4-type zinc fingers span residues 28–55 (CQVCGQKSHGKHFGAVTCRACAAFFRRC) and 64–88 (CRRNMNCEFLKNGWFNCKPCRLKKC). Residues 169–424 (EVPLHTPNAL…FSHPEVFIDL (256 aa)) enclose the NR LBD domain.

It belongs to the nuclear hormone receptor family.

It localises to the nucleus. Functionally, orphan nuclear receptor. This is Nuclear hormone receptor family member nhr-55 (nhr-55) from Caenorhabditis elegans.